Consider the following 372-residue polypeptide: tRNA pseudouridine synthase D (372 aa).

The active-site Nucleophile is Asp85. The TRUD domain maps to 160-330 (GFTNYFGYQR…MQGSRRFMWG (171 aa)).

It belongs to the pseudouridine synthase TruD family.

It catalyses the reaction uridine(13) in tRNA = pseudouridine(13) in tRNA. Functionally, responsible for synthesis of pseudouridine from uracil-13 in transfer RNAs. In Campylobacter jejuni subsp. jejuni serotype O:23/36 (strain 81-176), this protein is tRNA pseudouridine synthase D.